Here is a 641-residue protein sequence, read N- to C-terminus: 1-deoxy-D-xylulose-5-phosphate synthase (641 aa).

Residues His-79 and 120–122 (AHS) contribute to the thiamine diphosphate site. Asp-151 is a Mg(2+) binding site. Thiamine diphosphate-binding positions include 152–153 (GA), Asn-180, Tyr-290, and Glu-372. Asn-180 is a binding site for Mg(2+).

This sequence belongs to the transketolase family. DXPS subfamily. In terms of assembly, homodimer. Requires Mg(2+) as cofactor. The cofactor is thiamine diphosphate.

It catalyses the reaction D-glyceraldehyde 3-phosphate + pyruvate + H(+) = 1-deoxy-D-xylulose 5-phosphate + CO2. It participates in metabolic intermediate biosynthesis; 1-deoxy-D-xylulose 5-phosphate biosynthesis; 1-deoxy-D-xylulose 5-phosphate from D-glyceraldehyde 3-phosphate and pyruvate: step 1/1. Functionally, catalyzes the acyloin condensation reaction between C atoms 2 and 3 of pyruvate and glyceraldehyde 3-phosphate to yield 1-deoxy-D-xylulose-5-phosphate (DXP). The protein is 1-deoxy-D-xylulose-5-phosphate synthase of Bradyrhizobium sp. (strain BTAi1 / ATCC BAA-1182).